The primary structure comprises 89 residues: Exodeoxyribonuclease 7 small subunit (89 aa).

The interval 1–23 (MRPWRCVSMAKAPAAPSSTQPDP) is disordered.

Belongs to the XseB family. As to quaternary structure, heterooligomer composed of large and small subunits.

It localises to the cytoplasm. The catalysed reaction is Exonucleolytic cleavage in either 5'- to 3'- or 3'- to 5'-direction to yield nucleoside 5'-phosphates.. Its function is as follows. Bidirectionally degrades single-stranded DNA into large acid-insoluble oligonucleotides, which are then degraded further into small acid-soluble oligonucleotides. The protein is Exodeoxyribonuclease 7 small subunit of Acidovorax sp. (strain JS42).